The chain runs to 313 residues: Probable WRKY transcription factor 41 (313 aa).

The segment at residues 135 to 203 (GLEGPHDDIF…YRGTHTCSQG (69 aa)) is a DNA-binding region (WRKY).

This sequence belongs to the WRKY group III family.

It is found in the nucleus. In terms of biological role, transcription factor. Interacts specifically with the W box (5'-(T)TGAC[CT]-3'), a frequently occurring elicitor-responsive cis-acting element. This Arabidopsis thaliana (Mouse-ear cress) protein is Probable WRKY transcription factor 41 (WRKY41).